A 141-amino-acid polypeptide reads, in one-letter code: Nucleoside diphosphate kinase (141 aa).

The ATP site is built by lysine 11, phenylalanine 59, arginine 87, threonine 93, arginine 104, and asparagine 114. The Pros-phosphohistidine intermediate role is filled by histidine 117.

The protein belongs to the NDK family. In terms of assembly, homotetramer. Mg(2+) serves as cofactor.

The protein localises to the cytoplasm. The enzyme catalyses a 2'-deoxyribonucleoside 5'-diphosphate + ATP = a 2'-deoxyribonucleoside 5'-triphosphate + ADP. The catalysed reaction is a ribonucleoside 5'-diphosphate + ATP = a ribonucleoside 5'-triphosphate + ADP. Functionally, major role in the synthesis of nucleoside triphosphates other than ATP. The ATP gamma phosphate is transferred to the NDP beta phosphate via a ping-pong mechanism, using a phosphorylated active-site intermediate. This Burkholderia multivorans (strain ATCC 17616 / 249) protein is Nucleoside diphosphate kinase.